A 261-amino-acid chain; its full sequence is Cytochrome c oxidase subunit 3 (261 aa).

Residues 1 to 15 are Mitochondrial matrix-facing; sequence MTHQTHAYHMVNPSP. The chain crosses the membrane as a helical span at residues 16 to 34; that stretch reads WPLTGALSALLMTSGLIMW. The Mitochondrial intermembrane segment spans residues 35–40; sequence FHFNSV. Residues 41-66 traverse the membrane as a helical segment; it reads ALLMLGLTTNMLTMYQWWRDVIREST. At 67–72 the chain is on the mitochondrial matrix side; the sequence is FQGHHT. Residues 73-105 form a helical membrane-spanning segment; that stretch reads PNVQKGLRYGMILFIISEVLFFTGFFWAFYHSS. Residues 106 to 128 lie on the Mitochondrial intermembrane side of the membrane; it reads LAPTPELGGCWPPTGIHPLNPLE. A helical membrane pass occupies residues 129–152; it reads VPLLNTSVLLASGVSITWAHHSLM. Topologically, residues 153–155 are mitochondrial matrix; that stretch reads EGN. A helical membrane pass occupies residues 156-183; sequence RNHMLQALFITIALGVYFTLLQASEYYE. Topologically, residues 184–190 are mitochondrial intermembrane; it reads APFTISD. The helical transmembrane segment at 191–223 threads the bilayer; sequence GVYGSTFFVATGFHGLHVIIGSTFLIVCFFRQL. Residues 224–232 lie on the Mitochondrial matrix side of the membrane; it reads KFHFTSSHH. A helical transmembrane segment spans residues 233 to 256; it reads FGFEAAAWYWHFVDVVWLFLYVSI. At 257 to 261 the chain is on the mitochondrial intermembrane side; that stretch reads YWWGS.

This sequence belongs to the cytochrome c oxidase subunit 3 family. As to quaternary structure, component of the cytochrome c oxidase (complex IV, CIV), a multisubunit enzyme composed of 14 subunits. The complex is composed of a catalytic core of 3 subunits MT-CO1, MT-CO2 and MT-CO3, encoded in the mitochondrial DNA, and 11 supernumerary subunits COX4I, COX5A, COX5B, COX6A, COX6B, COX6C, COX7A, COX7B, COX7C, COX8 and NDUFA4, which are encoded in the nuclear genome. The complex exists as a monomer or a dimer and forms supercomplexes (SCs) in the inner mitochondrial membrane with NADH-ubiquinone oxidoreductase (complex I, CI) and ubiquinol-cytochrome c oxidoreductase (cytochrome b-c1 complex, complex III, CIII), resulting in different assemblies (supercomplex SCI(1)III(2)IV(1) and megacomplex MCI(2)III(2)IV(2)).

The protein resides in the mitochondrion inner membrane. It catalyses the reaction 4 Fe(II)-[cytochrome c] + O2 + 8 H(+)(in) = 4 Fe(III)-[cytochrome c] + 2 H2O + 4 H(+)(out). Its function is as follows. Component of the cytochrome c oxidase, the last enzyme in the mitochondrial electron transport chain which drives oxidative phosphorylation. The respiratory chain contains 3 multisubunit complexes succinate dehydrogenase (complex II, CII), ubiquinol-cytochrome c oxidoreductase (cytochrome b-c1 complex, complex III, CIII) and cytochrome c oxidase (complex IV, CIV), that cooperate to transfer electrons derived from NADH and succinate to molecular oxygen, creating an electrochemical gradient over the inner membrane that drives transmembrane transport and the ATP synthase. Cytochrome c oxidase is the component of the respiratory chain that catalyzes the reduction of oxygen to water. Electrons originating from reduced cytochrome c in the intermembrane space (IMS) are transferred via the dinuclear copper A center (CU(A)) of subunit 2 and heme A of subunit 1 to the active site in subunit 1, a binuclear center (BNC) formed by heme A3 and copper B (CU(B)). The BNC reduces molecular oxygen to 2 water molecules using 4 electrons from cytochrome c in the IMS and 4 protons from the mitochondrial matrix. This chain is Cytochrome c oxidase subunit 3 (MT-CO3), found in Nanger granti (Grant's gazelle).